Here is a 393-residue protein sequence, read N- to C-terminus: Acetylornithine aminotransferase (393 aa).

Pyridoxal 5'-phosphate-binding positions include 100–101 (GA) and F133. Position 136 (R136) interacts with N(2)-acetyl-L-ornithine. Residue 218 to 221 (DEVQ) participates in pyridoxal 5'-phosphate binding. At K247 the chain carries N6-(pyridoxal phosphate)lysine. Residue S274 participates in N(2)-acetyl-L-ornithine binding. A pyridoxal 5'-phosphate-binding site is contributed by T275.

It belongs to the class-III pyridoxal-phosphate-dependent aminotransferase family. ArgD subfamily. Homodimer. Requires pyridoxal 5'-phosphate as cofactor.

It is found in the cytoplasm. It carries out the reaction N(2)-acetyl-L-ornithine + 2-oxoglutarate = N-acetyl-L-glutamate 5-semialdehyde + L-glutamate. It functions in the pathway amino-acid biosynthesis; L-arginine biosynthesis; N(2)-acetyl-L-ornithine from L-glutamate: step 4/4. This is Acetylornithine aminotransferase from Caldanaerobacter subterraneus subsp. tengcongensis (strain DSM 15242 / JCM 11007 / NBRC 100824 / MB4) (Thermoanaerobacter tengcongensis).